We begin with the raw amino-acid sequence, 400 residues long: Phosphoglycerate kinase (400 aa).

Substrate contacts are provided by residues D23–N25, R38, H61–R64, R120, and R153. ATP contacts are provided by residues K203, E325, and G355–T358.

This sequence belongs to the phosphoglycerate kinase family. Monomer.

It localises to the cytoplasm. The catalysed reaction is (2R)-3-phosphoglycerate + ATP = (2R)-3-phospho-glyceroyl phosphate + ADP. Its pathway is carbohydrate degradation; glycolysis; pyruvate from D-glyceraldehyde 3-phosphate: step 2/5. The protein is Phosphoglycerate kinase of Methylorubrum extorquens (strain CM4 / NCIMB 13688) (Methylobacterium extorquens).